The chain runs to 372 residues: tRNA 2-selenouridine synthase (372 aa).

One can recognise a Rhodanese domain in the interval 19 to 142 (LASGHPIMDV…MRQYLIDTID (124 aa)). The active-site S-selanylcysteine intermediate is C102.

This sequence belongs to the SelU family. Monomer.

It carries out the reaction 5-methylaminomethyl-2-thiouridine(34) in tRNA + selenophosphate + (2E)-geranyl diphosphate + H2O + H(+) = 5-methylaminomethyl-2-selenouridine(34) in tRNA + (2E)-thiogeraniol + phosphate + diphosphate. The enzyme catalyses 5-methylaminomethyl-2-thiouridine(34) in tRNA + (2E)-geranyl diphosphate = 5-methylaminomethyl-S-(2E)-geranyl-thiouridine(34) in tRNA + diphosphate. It catalyses the reaction 5-methylaminomethyl-S-(2E)-geranyl-thiouridine(34) in tRNA + selenophosphate + H(+) = 5-methylaminomethyl-2-(Se-phospho)selenouridine(34) in tRNA + (2E)-thiogeraniol. The catalysed reaction is 5-methylaminomethyl-2-(Se-phospho)selenouridine(34) in tRNA + H2O = 5-methylaminomethyl-2-selenouridine(34) in tRNA + phosphate. In terms of biological role, involved in the post-transcriptional modification of the uridine at the wobble position (U34) of tRNA(Lys), tRNA(Glu) and tRNA(Gln). Catalyzes the conversion of 2-thiouridine (S2U-RNA) to 2-selenouridine (Se2U-RNA). Acts in a two-step process involving geranylation of 2-thiouridine (S2U) to S-geranyl-2-thiouridine (geS2U) and subsequent selenation of the latter derivative to 2-selenouridine (Se2U) in the tRNA chain. In Shewanella loihica (strain ATCC BAA-1088 / PV-4), this protein is tRNA 2-selenouridine synthase.